A 370-amino-acid polypeptide reads, in one-letter code: Chorismate synthase (370 aa).

Arg48 contacts NADP(+). FMN-binding positions include 125 to 127, 241 to 242, Gly285, 300 to 304, and Arg326; these read RSS, NA, and KPTSS.

This sequence belongs to the chorismate synthase family. As to quaternary structure, homotetramer. FMNH2 serves as cofactor.

The enzyme catalyses 5-O-(1-carboxyvinyl)-3-phosphoshikimate = chorismate + phosphate. It functions in the pathway metabolic intermediate biosynthesis; chorismate biosynthesis; chorismate from D-erythrose 4-phosphate and phosphoenolpyruvate: step 7/7. Functionally, catalyzes the anti-1,4-elimination of the C-3 phosphate and the C-6 proR hydrogen from 5-enolpyruvylshikimate-3-phosphate (EPSP) to yield chorismate, which is the branch point compound that serves as the starting substrate for the three terminal pathways of aromatic amino acid biosynthesis. This reaction introduces a second double bond into the aromatic ring system. The polypeptide is Chorismate synthase (Jannaschia sp. (strain CCS1)).